A 125-amino-acid chain; its full sequence is MKKRSETLGSDQSSSEIIEHVLEELNLKNIERRVKKYDQIESEYKTNIENEKKAFIKDVSQVQQKIKEFEIQKANQIKQLNEEKLSIEARKQQLEIEIRNQLLQYAEKLRIVVKTPMNQPTNTEV.

The stretch at 45–104 (KTNIENEKKAFIKDVSQVQQKIKEFEIQKANQIKQLNEEKLSIEARKQQLEIEIRNQLLQ) forms a coiled coil.

In terms of assembly, component of linear elements (LinEs), which are similar to synaptonemal complexes, at least composed of rec27, rec25, rec10 and mug20.

The protein localises to the cytoplasm. Its subcellular location is the nucleus. It is found in the chromosome. Functionally, during meiotic DNA recombination, binds to and activates DNA double-strand break (DSB) hotspot sites. This is Linear element protein rec27 from Schizosaccharomyces pombe (strain 972 / ATCC 24843) (Fission yeast).